The sequence spans 170 residues: Large ribosomal subunit protein uL18m (170 aa).

Belongs to the universal ribosomal protein uL18 family. Component of the mitochondrial ribosome large subunit (39S) which comprises a 16S rRNA and about 50 distinct proteins.

It localises to the mitochondrion. The polypeptide is Large ribosomal subunit protein uL18m (mrpl-18) (Caenorhabditis elegans).